We begin with the raw amino-acid sequence, 406 residues long: Suppressor protein SRP40 (406 aa).

Positions 1–25 (MASKKIKVDEVPKLSVKEKEIEEKS) are enriched in basic and acidic residues. A disordered region spans residues 1–335 (MASKKIKVDE…EIKEGQRKHF (335 aa)). Over residues 26-115 (SSSSSSSSSS…SSSSSSSSDE (90 aa)) the composition is skewed to low complexity. A compositionally biased stretch (basic and acidic residues) spans 125-148 (ETKKRARESDNEDAKETKKAKTEP). Ser-133 carries the post-translational modification Phosphoserine. 4 stretches are compositionally biased toward low complexity: residues 149–168 (ESSS…SESE), 176–186 (DSSSSSSSSSD), 194–233 (DSQS…SSSD), and 243–268 (DSDS…SSDS). Positions 283-297 (LETKEATADESKAEE) are enriched in basic and acidic residues. Phosphothreonine is present on Thr-289. Ser-293 carries the post-translational modification Phosphoserine. Residues 298–316 (TPASSNESTPSASSSSSAN) show a composition bias toward low complexity. A compositionally biased stretch (basic and acidic residues) spans 325–335 (DEIKEGQRKHF). Residue Ser-394 is modified to Phosphoserine.

In terms of processing, pyrophosphorylated by 5-diphosphoinositol pentakisphosphate (5-IP7). Serine pyrophosphorylation is achieved by Mg(2+)-dependent, but enzyme independent transfer of a beta-phosphate from a inositol pyrophosphate to a pre-phosphorylated serine residue.

Not known; weak suppressor of a mutant of the subunit AC40 of DNA dependent RNA polymerase I and III. The polypeptide is Suppressor protein SRP40 (SRP40) (Saccharomyces cerevisiae (strain ATCC 204508 / S288c) (Baker's yeast)).